The following is a 32-amino-acid chain: Cytochrome b6-f complex subunit 7 (32 aa).

Residues 9-27 form a helical membrane-spanning segment; that stretch reads AAVFWVLIPVGLLGGVLLL.

Belongs to the PetM family. In terms of assembly, the 4 large subunits of the cytochrome b6-f complex are cytochrome b6, subunit IV (17 kDa polypeptide, PetD), cytochrome f and the Rieske protein, while the 4 small subunits are PetG, PetL, PetM and PetN. The complex functions as a dimer.

Its subcellular location is the cellular thylakoid membrane. Functionally, component of the cytochrome b6-f complex, which mediates electron transfer between photosystem II (PSII) and photosystem I (PSI), cyclic electron flow around PSI, and state transitions. The sequence is that of Cytochrome b6-f complex subunit 7 from Prochlorococcus marinus (strain NATL1A).